The primary structure comprises 445 residues: Adenylyltransferase and sulfurtransferase MOCS3 (445 aa).

The tract at residues 49-70 (LPPSAAAEVEPTGSPSSSSSAA) is disordered. ATP contacts are provided by residues Gly-106, Asp-127, 134 to 138 (DNLHR), Lys-151, and 170 to 171 (NN). Cys-211 and Cys-214 together coordinate Zn(2+). The active-site Glycyl thioester intermediate; for adenylyltransferase activity is Cys-228. Zn(2+) contacts are provided by Cys-286 and Cys-289. The Rhodanese domain maps to 342 to 443 (SGRPHLLVDV…WAKEVDPSFL (102 aa)). Cys-403 acts as the Cysteine persulfide intermediate; for sulfurtransferase activity in catalysis.

In the N-terminal section; belongs to the HesA/MoeB/ThiF family. UBA4 subfamily. The cofactor is Zn(2+).

It is found in the cytoplasm. Its subcellular location is the cytosol. The enzyme catalyses [molybdopterin-synthase sulfur-carrier protein]-C-terminal Gly-Gly + ATP + H(+) = [molybdopterin-synthase sulfur-carrier protein]-C-terminal Gly-Gly-AMP + diphosphate. The catalysed reaction is [molybdopterin-synthase sulfur-carrier protein]-C-terminal Gly-Gly-AMP + S-sulfanyl-L-cysteinyl-[cysteine desulfurase] + AH2 = [molybdopterin-synthase sulfur-carrier protein]-C-terminal-Gly-aminoethanethioate + L-cysteinyl-[cysteine desulfurase] + A + AMP + 2 H(+). It functions in the pathway tRNA modification; 5-methoxycarbonylmethyl-2-thiouridine-tRNA biosynthesis. The protein operates within cofactor biosynthesis; molybdopterin biosynthesis. In terms of biological role, plays a central role in 2-thiolation of mcm(5)S(2)U at tRNA wobble positions of cytosolic tRNA(Lys), tRNA(Glu) and tRNA(Gln). Also essential during biosynthesis of the molybdenum cofactor. Acts by mediating the C-terminal thiocarboxylation of sulfur carriers URM1 and MOCS2A. Its N-terminus first activates URM1 and MOCS2A as acyl-adenylates (-COAMP), then the persulfide sulfur on the catalytic cysteine is transferred to URM1 and MOCS2A to form thiocarboxylation (-COSH) of their C-terminus. The reaction probably involves hydrogen sulfide that is generated from the persulfide intermediate and that acts as a nucleophile towards URM1 and MOCS2A. Subsequently, a transient disulfide bond is formed. Does not use thiosulfate as sulfur donor; NFS1 probably acting as a sulfur donor for thiocarboxylation reactions. The sequence is that of Adenylyltransferase and sulfurtransferase MOCS3 from Oryza sativa subsp. japonica (Rice).